A 267-amino-acid polypeptide reads, in one-letter code: MPKVTKIEVQKKNKERFNLFLDGEFEMGIDIDTLVKFNLKKDQILEPSDMQNIQEYDHYRRGVNLAIQYLSYKKRTEREVIQYLEKNDIQSNAIQDVIDYCYKEKFIDHEDYAESLKNTMIHTTDKGPEIYRQKLYQLGIEVTIIEKYVEAYEQQQPLDDVIKVAEKVMKSKKGPEAKVKQKVTQSLLQKGYKFETIQLVMNEIDFSQDEETLDHLLQRDLEKVYNKNCRKYDSDKSVIKTIEALMRKGYNYDKIKSKLEESGISNE.

This sequence belongs to the RecX family.

It localises to the cytoplasm. Its function is as follows. Modulates RecA activity. In Staphylococcus epidermidis (strain ATCC 12228 / FDA PCI 1200), this protein is Regulatory protein RecX.